The sequence spans 103 residues: Cyclotide vitri-A (103 aa).

A signal peptide spans 1-9 (AAFALPAFA). Positions 10 to 69 (SFEKDVITPAALEAVLNRKAPLSNIMMENDAIVNVIANVKTVISNPVLEEALLKTNHGVN) are excised as a propeptide. The cyclopeptide (Gly-Asn) cross-link spans 70 to 99 (GIPCGESCVWIPCITSAIGCSCKSKVCYRN). 3 disulfide bridges follow: C73/C89, C77/C91, and C82/C96. Positions 100-103 (SLDN) are excised as a propeptide.

Post-translationally, this is a cyclic peptide.

Its function is as follows. Probably participates in a plant defense mechanism. This Viola biflora (Yellow wood violet) protein is Cyclotide vitri-A.